Here is a 128-residue protein sequence, read N- to C-terminus: Centrosomal protein 15 (128 aa).

It localises to the cell projection. The protein resides in the cilium. In terms of biological role, may play a role in ciliary assembly. In Homo sapiens (Human), this protein is Centrosomal protein 15.